A 451-amino-acid chain; its full sequence is Tubulin alpha-2 chain (451 aa).

A GTP-binding site is contributed by Gln-11. Lys-40 carries the N6-acetyllysine modification. GTP contacts are provided by Glu-71, Gly-144, Thr-145, Thr-179, Asn-206, and Asn-228. Glu-71 lines the Mg(2+) pocket. Residue Glu-254 is part of the active site.

It belongs to the tubulin family. Dimer of alpha and beta chains. A typical microtubule is a hollow water-filled tube with an outer diameter of 25 nm and an inner diameter of 15 nM. Alpha-beta heterodimers associate head-to-tail to form protofilaments running lengthwise along the microtubule wall with the beta-tubulin subunit facing the microtubule plus end conferring a structural polarity. Microtubules usually have 13 protofilaments but different protofilament numbers can be found in some organisms and specialized cells. The cofactor is Mg(2+). In terms of processing, undergoes a tyrosination/detyrosination cycle, the cyclic removal and re-addition of a C-terminal tyrosine residue by the enzymes tubulin tyrosine carboxypeptidase (TTCP) and tubulin tyrosine ligase (TTL), respectively. Acetylation of alpha chains at Lys-40 stabilizes microtubules and affects affinity and processivity of microtubule motors. This modification has a role in multiple cellular functions, ranging from cell motility, cell cycle progression or cell differentiation to intracellular trafficking and signaling.

The protein resides in the cytoplasm. It is found in the cytoskeleton. It carries out the reaction GTP + H2O = GDP + phosphate + H(+). In terms of biological role, tubulin is the major constituent of microtubules, a cylinder consisting of laterally associated linear protofilaments composed of alpha- and beta-tubulin heterodimers. Microtubules grow by the addition of GTP-tubulin dimers to the microtubule end, where a stabilizing cap forms. Below the cap, tubulin dimers are in GDP-bound state, owing to GTPase activity of alpha-tubulin. The sequence is that of Tubulin alpha-2 chain (TUBA2) from Hordeum vulgare (Barley).